We begin with the raw amino-acid sequence, 313 residues long: Olfactory receptor 6E1 (313 aa).

Asn-3 is a glycosylation site (N-linked (GlcNAc...) asparagine). The next 7 membrane-spanning stretches (helical) occupy residues 25–45 (IFLG…LIIF), 64–84 (FAML…TNII), 96–116 (FLQA…LAVM), 142–162 (LVFC…SIVF), 192–212 (LVEF…LAVT), 238–258 (TCSS…FMYV), and 271–291 (KVVA…IYTL). The cysteines at positions 95 and 177 are disulfide-linked.

This sequence belongs to the G-protein coupled receptor 1 family.

The protein resides in the cell membrane. In terms of biological role, odorant receptor. Activated by (-)-citronellal and to a lesser extent by (+)-citronellal. Not activated by carvone or limonene. This chain is Olfactory receptor 6E1, found in Mus musculus (Mouse).